The following is a 142-amino-acid chain: Universal stress protein C (142 aa).

It belongs to the universal stress protein A family.

The protein resides in the cytoplasm. Its function is as follows. Required for resistance to DNA-damaging agents. The sequence is that of Universal stress protein C (uspC) from Salmonella typhimurium (strain LT2 / SGSC1412 / ATCC 700720).